The primary structure comprises 150 residues: Protein SprT-like (150 aa).

Residues 6–147 (LQKLTEDISE…CGKCRGKIKR (142 aa)) enclose the SprT-like domain. Residue histidine 67 coordinates Zn(2+). Glutamate 68 is a catalytic residue. Residue histidine 71 coordinates Zn(2+).

It belongs to the SprT family. Requires Zn(2+) as cofactor.

The protein localises to the cytoplasm. This is Protein SprT-like (ydcK) from Bacillus subtilis (strain 168).